Reading from the N-terminus, the 191-residue chain is Probable calcium-binding protein CML8 (191 aa).

The interval 1–41 (MASKYRGYYHDEASSAAGGGGGGGGGDGYRREKQVRKKRLT) is disordered. The span at 17 to 27 (AGGGGGGGGGD) shows a compositional bias: gly residues. EF-hand domains are found at residues 43-78 (QKRKEIKEAFDLFDTDGSGTIDPKELNVAMRALGFE), 79-114 (MTPEQIHQMIAEVDKDGSGTIDFDEFVHMMTDKMGE), 116-151 (DAREELNKAFKIIDKDNNGKISDVDIQRLAIETGEP), and 152-187 (FTLDEVREMIEAADENGDGEVDHEEFLKMMKRIGFG). Positions 56, 58, 60, 62, 67, 92, 94, 96, 98, 103, 129, 131, 133, 135, 140, 165, 167, 169, 171, and 176 each coordinate Ca(2+).

Potential calcium sensor. The chain is Probable calcium-binding protein CML8 (CML8) from Oryza sativa subsp. japonica (Rice).